The sequence spans 430 residues: Adenylosuccinate synthetase (430 aa).

Residues 13 to 19 (GDEGKGK) and 41 to 43 (GHT) contribute to the GTP site. D14 acts as the Proton acceptor in catalysis. D14 and G41 together coordinate Mg(2+). IMP contacts are provided by residues 14 to 17 (DEGK), 39 to 42 (NAGH), T130, R144, Q225, T240, and R304. H42 acts as the Proton donor in catalysis. Position 300–306 (300–306 (ASTGRPR)) interacts with substrate. GTP is bound by residues R306, 332–334 (KLD), and 414–416 (STG).

The protein belongs to the adenylosuccinate synthetase family. As to quaternary structure, homodimer. It depends on Mg(2+) as a cofactor.

It localises to the cytoplasm. It catalyses the reaction IMP + L-aspartate + GTP = N(6)-(1,2-dicarboxyethyl)-AMP + GDP + phosphate + 2 H(+). The protein operates within purine metabolism; AMP biosynthesis via de novo pathway; AMP from IMP: step 1/2. In terms of biological role, plays an important role in the de novo pathway of purine nucleotide biosynthesis. Catalyzes the first committed step in the biosynthesis of AMP from IMP. This Xylella fastidiosa (strain 9a5c) protein is Adenylosuccinate synthetase.